Here is a 361-residue protein sequence, read N- to C-terminus: Hsc70-interacting protein (361 aa).

The segment at 39–98 is disordered; it reads GGTIPPAPASTSTDETSKGKAEEQPEEPVKSPEPESEESDLEIDNEGVIEPDNDDPQEMG. Positions 53–71 are enriched in basic and acidic residues; the sequence is ETSKGKAEEQPEEPVKSPE. A compositionally biased stretch (acidic residues) spans 72–98; that stretch reads PESEESDLEIDNEGVIEPDNDDPQEMG. 3 TPR repeats span residues 112–145, 147–179, and 181–213; these read ANEKKMEAINALSEGDLQKAVNLFTDAIKLNPCL, ILYAKRASVFVKLQKPNAAIRDCDRAIKINPDS, and QTYKWRGKAHRLLGHWEEAAHDLALACKLDYDE. Over residues 254–270 the composition is skewed to basic and acidic residues; the sequence is KAREEHERAQREEEARR. Positions 254 to 292 are disordered; that stretch reads KAREEHERAQREEEARRQAGGAQFGGFPGGFPGGFPGAM. Positions 275–292 are enriched in gly residues; that stretch reads AQFGGFPGGFPGGFPGAM. The region spanning 311–350 is the STI1 domain; the sequence is DPEVLAAMQDPEVMAAFQDVAQNPANMSKYQNNPKVMSLI.

Belongs to the FAM10 family. Homotetramer. Interacts with HSC70 as well as DNAJ homologs and HSP90.

The protein resides in the cytoplasm. In terms of biological role, one HIP oligomer binds the ATPase domains of at least two HSC70 molecules dependent on activation of the HSC70 ATPase by HSP40. Stabilizes the ADP state of HSC70 that has a high affinity for substrate protein. Through its own chaperone activity, it may contribute to the interaction of HSC70 with various target proteins. The protein is Hsc70-interacting protein (ST13) of Gallus gallus (Chicken).